The sequence spans 511 residues: MDIRPAEISDILKQQIASFDQVETVSETGTVLSIGDGIARVYGLTNVMAGEMVEFEGTGLKGMALNLEADNVGVVLFGDGDSIREGDTVLRTKSVVEVPVGKGLLGRVVDGLGNPIDGRGPLTDVEYRRAEVKAPGIMPRQSVSEPMQTGIKAIDALVPIGRGQRELIIGDRQTGKTAILIDTIVAQKPVNAEGDPKKSLYCIYVAVGQKRSTVANLVRTLIEHGAMEYSIVVAATASDAAPMQYLAPYTACAMGEYFRDNGMHALVCYDDLSKQAVAYRQMSLLLRRPPAREAFPGDVFYLHSRLLERAAKMSDANGGGSLTALPVIETQAGDTAAYIPTNVISITDGQIFLETDLFYRGIRPAVNVGGSVSRVGSAAQIKAMKQVAGKIKLELAQYREMAAFSQFASDLDAATRKQLDRGARLVELLKQPETSPLPVEEQVVVLYAGTRGYVDPIAVDKVVAYEAALLSELRGAGSDILTAIRNDRQIKPETEGKLKELLEAFGKRFSA.

ATP is bound at residue Gly-170–Thr-177.

The protein belongs to the ATPase alpha/beta chains family. In terms of assembly, F-type ATPases have 2 components, CF(1) - the catalytic core - and CF(0) - the membrane proton channel. CF(1) has five subunits: alpha(3), beta(3), gamma(1), delta(1), epsilon(1). CF(0) has three main subunits: a(1), b(2) and c(9-12). The alpha and beta chains form an alternating ring which encloses part of the gamma chain. CF(1) is attached to CF(0) by a central stalk formed by the gamma and epsilon chains, while a peripheral stalk is formed by the delta and b chains.

Its subcellular location is the cell inner membrane. It carries out the reaction ATP + H2O + 4 H(+)(in) = ADP + phosphate + 5 H(+)(out). Its function is as follows. Produces ATP from ADP in the presence of a proton gradient across the membrane. The alpha chain is a regulatory subunit. The sequence is that of ATP synthase subunit alpha 1 from Gluconobacter oxydans (strain 621H) (Gluconobacter suboxydans).